A 565-amino-acid polypeptide reads, in one-letter code: Oxygen-dependent choline dehydrogenase (565 aa).

Position 6–35 (6–35 (DYIIVGAGSAGNTLATRLTEDAGVTVLLLE)) interacts with FAD. Residues 182–201 (QQEGFGPMDRTVTKNGRRSS) form a disordered region. The Proton acceptor role is filled by His475.

Belongs to the GMC oxidoreductase family. It depends on FAD as a cofactor.

The enzyme catalyses choline + A = betaine aldehyde + AH2. It catalyses the reaction betaine aldehyde + NAD(+) + H2O = glycine betaine + NADH + 2 H(+). It functions in the pathway amine and polyamine biosynthesis; betaine biosynthesis via choline pathway; betaine aldehyde from choline (cytochrome c reductase route): step 1/1. Involved in the biosynthesis of the osmoprotectant glycine betaine. Catalyzes the oxidation of choline to betaine aldehyde and betaine aldehyde to glycine betaine at the same rate. This chain is Oxygen-dependent choline dehydrogenase, found in Pseudomonas putida (strain ATCC 47054 / DSM 6125 / CFBP 8728 / NCIMB 11950 / KT2440).